We begin with the raw amino-acid sequence, 373 residues long: Probable di-N-acetylchitobiase 1 (373 aa).

Residues Met1 to Ser20 form the signal peptide. Residues Lys21–Phe369 form the GH18 domain. Asn48 is a glycosylation site (N-linked (GlcNAc...) asparagine). Chitin-binding positions include Pro53 to Tyr54 and Asn82 to Arg85. N-linked (GlcNAc...) asparagine glycosylation is present at Asn99. Glu127 functions as the Proton donor in the catalytic mechanism. Residues Tyr128 and Met191 to Asp194 contribute to the chitin site. N-linked (GlcNAc...) asparagine glycosylation is found at Asn222, Asn250, Asn269, Asn279, and Asn288. Chitin is bound at residue Trp347.

The protein belongs to the glycosyl hydrolase 18 family.

Its subcellular location is the lysosome. Its function is as follows. Involved in the degradation of asparagine-linked glycoproteins. May hydrolyze of N-acetyl-beta-D-glucosamine (1-4)N-acetylglucosamine chitobiose core from the reducing end of the bond. In Dictyostelium discoideum (Social amoeba), this protein is Probable di-N-acetylchitobiase 1 (ctbs1).